The following is a 352-amino-acid chain: MTAALHIGHLSKSFQNTPVLNDISLSLDPGEILFIVGASGCGKTTLLRCLAGFEQPDFGEISLSGRTIFSKNTNLPVRERRLGYVVQEGVLFPHLTVYRNTAYGLGNGKGKTAQERQRIEAMLELTGISELAGRYPHELSGGQQQRVALARALAPDPELILLDEPFSALDEQLRRQIREDMIAALRANGKSAVFVSHDREEALQYADRIAVMKQGRILQTASPHELYRQPADLDAALFIGEGIVFPAALNADGTADCGLGRLPVQSGAPAGTRGTLLIRPEQFSLHPHSAPTASIHAVVLKTTPKARHTEISLRVGQTVLTLNLPSAPTLSDGISAVLHLDGPALFFPGNTL.

Positions 5 to 239 constitute an ABC transporter domain; that stretch reads LHIGHLSKSF…PADLDAALFI (235 aa). 37–44 contacts ATP; it reads GASGCGKT.

This sequence belongs to the ABC transporter superfamily. Fe(3+) ion importer (TC 3.A.1.10) family. The complex is composed of two ATP-binding proteins (FbpC), two transmembrane proteins (FbpB) and a solute-binding protein (FbpA).

It is found in the cell inner membrane. It carries out the reaction Fe(3+)(out) + ATP + H2O = Fe(3+)(in) + ADP + phosphate + H(+). Functionally, part of the ABC transporter complex FbpABC involved in Fe(3+) ions import. Responsible for energy coupling to the transport system. The protein is Fe(3+) ions import ATP-binding protein FbpC of Neisseria meningitidis serogroup A / serotype 4A (strain DSM 15465 / Z2491).